Reading from the N-terminus, the 202-residue chain is Outer-membrane lipoprotein carrier protein (202 aa).

Residues 1–21 (MKRLLVACCFLSGLISASALA) form the signal peptide.

It belongs to the LolA family. Monomer.

It localises to the periplasm. Functionally, participates in the translocation of lipoproteins from the inner membrane to the outer membrane. Only forms a complex with a lipoprotein if the residue after the N-terminal Cys is not an aspartate (The Asp acts as a targeting signal to indicate that the lipoprotein should stay in the inner membrane). This Yersinia pestis bv. Antiqua (strain Antiqua) protein is Outer-membrane lipoprotein carrier protein.